We begin with the raw amino-acid sequence, 3120 residues long: DNA-directed RNA polymerase subunit beta'' (3120 aa).

Residues Cys323, Cys396, Cys403, and Cys406 each coordinate Zn(2+). Residues 595-1130 are insert-1; that stretch reads FIGEGKQNVL…LKTLVLKKWF (536 aa). An insert-2 region spans residues 1796–2346; that stretch reads KGHLVAYARP…NGIIQAKSLL (551 aa). The segment at 2422 to 2610 is insert-3; sequence NSNFLENTHF…PEGEGEKDMT (189 aa). The interval 2726–2801 is insert-4; the sequence is FSKKRWKKSI…KQNQTIILAL (76 aa). Positions 2856-2996 are insert-5; that stretch reads ASKMSEYMFS…LNQLLSNNLD (141 aa). The tract at residues 2926–2956 is disordered; that stretch reads EGIDSSKIPSSNIPEGKVTQNNKRKSTRKNV. The segment covering 2932–2946 has biased composition (polar residues); the sequence is KIPSSNIPEGKVTQN.

It belongs to the RNA polymerase beta' chain family. RpoC2 subfamily. In terms of assembly, in plastids the minimal PEP RNA polymerase catalytic core is composed of four subunits: alpha, beta, beta', and beta''. When a (nuclear-encoded) sigma factor is associated with the core the holoenzyme is formed, which can initiate transcription. The cofactor is Zn(2+).

It localises to the plastid. Its subcellular location is the chloroplast. It catalyses the reaction RNA(n) + a ribonucleoside 5'-triphosphate = RNA(n+1) + diphosphate. In terms of biological role, DNA-dependent RNA polymerase catalyzes the transcription of DNA into RNA using the four ribonucleoside triphosphates as substrates. The polypeptide is DNA-directed RNA polymerase subunit beta'' (Chlamydomonas reinhardtii (Chlamydomonas smithii)).